The chain runs to 117 residues: Protein Wnt-6 (117 aa).

A lipid anchor (O-palmitoleoyl serine; by PORCN) is attached at serine 1. Cysteine 83 and cysteine 98 form a disulfide bridge. Asparagine 84 is a glycosylation site (N-linked (GlcNAc...) asparagine).

Belongs to the Wnt family. Palmitoleoylation is required for efficient binding to frizzled receptors. Depalmitoleoylation leads to Wnt signaling pathway inhibition.

It is found in the secreted. Its subcellular location is the extracellular space. It localises to the extracellular matrix. Functionally, ligand for members of the frizzled family of seven transmembrane receptors. Probable developmental protein. May be a signaling molecule which affects the development of discrete regions of tissues. Is likely to signal over only few cell diameters. The protein is Protein Wnt-6 (wnt6) of Thunnus thynnus (Atlantic bluefin tuna).